Consider the following 833-residue polypeptide: MALIVEFICELPNGVHARPASHVETLCNTFSSQIEWHNLRTDRKGNAKSALALIGTDTLAGDNCQLLISGADEQEAHQRLSQWLRDEFPHCDAPLAEVKSDELEPLPVSLTNLNPQIIRARTVCSGSAGGILTPISSLDLNALGNLPAAKGVDAEQSALENGLTLVLKNIEFRLLDSDGATSAILEAHRSLAGDTSLREHLLAGVSAGLSCAEAIVASANHFCEEFSRSSSSYLQERALDVRDVCFQLLQQIYGEQRFPAPGKLTQPAICMADELTPSQFLELDKNHLKGLLLKSGGTTSHTVILARSFNIPTLVGVDIDALTPWQQQTIYIDGNAGAIVVEPGEAVARYYQQEARVQDALREQQRVWLTQQARTADGIRIEIAANIAHSVEAQAAFGNGAEGVGLFRTEMLYMDRTSAPGESELYNIFCQALESANGRSIIVRTMDIGGDKPVDYLNIPAEANPFLGYRAVRIYEEYASLFTTQLRSILRASAHGSLKIMIPMISSMEEILWVKEKLAEAKQQLRNEHIPFDEKIQLGIMLEVPSVMFIIDQCCEEIDFFSIGSNDLTQYLLAVDRDNAKVTRHYNSLNPAFLRALDYAVQAVHRQGKWIGLCGELGAKGSVLPLLVGLGLDELSMSAPSIPAAKARMAQLDSRECRKLLNQAMACRTSLEVEHLLAQFRMTQQDAPLVTAECITLESDWRSKEEVLKGMTDNLLLAGRCRYPRKLEADLWAREAVFSTGLGFSFAIPHSKSEHIEQSTISVARLQAPVRWGDDEAQFIIMLTLNKHAAGDQHMRIFSRLARRIMHEEFRNALVNAASADAIASLLQHELEL.

The 90-residue stretch at 2-91 folds into the HPr domain; that stretch reads ALIVEFICEL…QWLRDEFPHC (90 aa). Catalysis depends on H16, which acts as the Tele-phosphohistidine intermediate; for HPr activity. A Phosphohistidine; by EI modification is found at H16. The interval 143 to 653 is PTS EI; sequence LGNLPAAKGV…AAKARMAQLD (511 aa). H301 functions as the Tele-phosphohistidine intermediate; for PTS EI activity in the catalytic mechanism. H301 carries the post-translational modification Phosphohistidine; by autocatalysis. Phosphoenolpyruvate contacts are provided by R408 and R444. Residues E543 and D567 each contribute to the Mg(2+) site. Residues 566 to 567 and R577 each bind phosphoenolpyruvate; that span reads ND. C614 acts as the Proton donor; for EI activity in catalysis. The 143-residue stretch at 688-830 folds into the PTS EIIA type-2 domain; the sequence is PLVTAECITL…DAIASLLQHE (143 aa). H750 (tele-phosphohistidine intermediate; for PTS EIIA activity) is an active-site residue. H750 bears the Phosphohistidine; by HPr mark.

Belongs to the PEP-utilizing enzyme family. Requires Mg(2+) as cofactor.

Its subcellular location is the cytoplasm. The catalysed reaction is L-histidyl-[protein] + phosphoenolpyruvate = N(pros)-phospho-L-histidyl-[protein] + pyruvate. It carries out the reaction D-fructose(out) + N(pros)-phospho-L-histidyl-[protein] = D-fructose 1-phosphate(in) + L-histidyl-[protein]. Multifunctional protein that includes general (non sugar-specific) and sugar-specific components of the phosphoenolpyruvate-dependent sugar phosphotransferase system (sugar PTS). This major carbohydrate active transport system catalyzes the phosphorylation of incoming sugar substrates concomitantly with their translocation across the cell membrane. The enzyme II FrwABC PTS system is involved in fructose transport. In Escherichia coli (strain K12), this protein is Multiphosphoryl transfer protein 2.